The chain runs to 299 residues: Superkiller complex protein 8 (299 aa).

7 WD repeats span residues 11–48 (AHED…FLTE), 54–93 (KHIL…LHKT), 96–135 (SGPL…KLRS), 138–177 (NTNK…RVSE), 180–219 (AHGV…PYIA), 223–263 (GHSS…LDSS), and 266–299 (AHAD…ALKQ).

It belongs to the SKI8 family.

The sequence is that of Superkiller complex protein 8 (skic8) from Dictyostelium discoideum (Social amoeba).